Consider the following 70-residue polypeptide: Large ribosomal subunit protein bL32 (70 aa).

Over residues 1–19 (MAVPKRKTTPSRRGMRRSH) the composition is skewed to basic residues. Residues 1–21 (MAVPKRKTTPSRRGMRRSHQA) form a disordered region.

Belongs to the bacterial ribosomal protein bL32 family.

This is Large ribosomal subunit protein bL32 from Gluconobacter oxydans (strain 621H) (Gluconobacter suboxydans).